The chain runs to 114 residues: UPF0212 protein Mbur_0968 (114 aa).

The protein belongs to the UPF0212 family.

This chain is UPF0212 protein Mbur_0968, found in Methanococcoides burtonii (strain DSM 6242 / NBRC 107633 / OCM 468 / ACE-M).